The sequence spans 405 residues: Tryptophan synthase beta chain (405 aa).

Lys-98 carries the post-translational modification N6-(pyridoxal phosphate)lysine.

The protein belongs to the TrpB family. Tetramer of two alpha and two beta chains. Requires pyridoxal 5'-phosphate as cofactor.

The catalysed reaction is (1S,2R)-1-C-(indol-3-yl)glycerol 3-phosphate + L-serine = D-glyceraldehyde 3-phosphate + L-tryptophan + H2O. It functions in the pathway amino-acid biosynthesis; L-tryptophan biosynthesis; L-tryptophan from chorismate: step 5/5. In terms of biological role, the beta subunit is responsible for the synthesis of L-tryptophan from indole and L-serine. In Parvibaculum lavamentivorans (strain DS-1 / DSM 13023 / NCIMB 13966), this protein is Tryptophan synthase beta chain.